Here is a 1020-residue protein sequence, read N- to C-terminus: Carbamoyl phosphate synthase arginine-specific large chain (1020 aa).

The tract at residues 1 to 401 (MPKNNAIHSI…ATLKAIASLE (401 aa)) is carboxyphosphate synthetic domain. Positions 129, 169, 175, 176, 208, 210, 215, 241, 242, 243, 284, and 298 each coordinate ATP. The ATP-grasp 1 domain occupies 133-327 (KTLMKRLHQP…IAKIAADIAI (195 aa)). Mg(2+) contacts are provided by glutamine 284, glutamate 298, and asparagine 300. Mn(2+) contacts are provided by glutamine 284, glutamate 298, and asparagine 300. Oligomerization domain regions lie at residues 402 to 542 (IDPK…FGQT) and 402 to 544 (IDPK…QTNE). 2 carbamoyl phosphate synthetic domain regions span residues 543–927 (NESH…ADSY) and 544–927 (ESHP…ADSY). One can recognise an ATP-grasp 2 domain in the interval 669-858 (ADCLRLLKIA…LAQLATRLIL (190 aa)). Positions 705, 744, 746, 750, 775, 776, 777, 778, and 818 each coordinate ATP. Residues glutamine 818 and asparagine 831 each coordinate Mg(2+). Residues glutamine 818 and asparagine 831 each coordinate Mn(2+). Positions 927–1020 (YHLETWQTVD…LAVTPTPATI (94 aa)) constitute an MGS-like domain. The allosteric domain stretch occupies residues 928–1020 (HLETWQTVDG…LAVTPTPATI (93 aa)).

The protein belongs to the CarB family. In terms of assembly, composed of two chains; the small (or glutamine) chain promotes the hydrolysis of glutamine to ammonia, which is used by the large (or ammonia) chain to synthesize carbamoyl phosphate. Tetramer of heterodimers (alpha,beta)4. Mg(2+) serves as cofactor. It depends on Mn(2+) as a cofactor.

It catalyses the reaction hydrogencarbonate + L-glutamine + 2 ATP + H2O = carbamoyl phosphate + L-glutamate + 2 ADP + phosphate + 2 H(+). It carries out the reaction hydrogencarbonate + NH4(+) + 2 ATP = carbamoyl phosphate + 2 ADP + phosphate + 2 H(+). It functions in the pathway amino-acid biosynthesis; L-arginine biosynthesis; carbamoyl phosphate from bicarbonate: step 1/1. Large subunit of the glutamine-dependent carbamoyl phosphate synthetase (CPSase). CPSase catalyzes the formation of carbamoyl phosphate from the ammonia moiety of glutamine, carbonate, and phosphate donated by ATP, constituting the first step of the biosynthetic pathway leading to arginine and/or urea. The large subunit (synthetase) binds the substrates ammonia (free or transferred from glutamine from the small subunit), hydrogencarbonate and ATP and carries out an ATP-coupled ligase reaction, activating hydrogencarbonate by forming carboxy phosphate which reacts with ammonia to form carbamoyl phosphate. The chain is Carbamoyl phosphate synthase arginine-specific large chain from Lactiplantibacillus plantarum (strain ATCC BAA-793 / NCIMB 8826 / WCFS1) (Lactobacillus plantarum).